We begin with the raw amino-acid sequence, 668 residues long: DNA ligase (668 aa).

NAD(+) is bound by residues 35 to 39 (DKEYD) and 83 to 84 (SL). Lys125 acts as the N6-AMP-lysine intermediate in catalysis. 3 residues coordinate NAD(+): Arg147, Glu181, and Lys317. Zn(2+) is bound by residues Cys410, Cys413, Cys426, and Cys432. The BRCT domain maps to 591–668 (KKDNKFNGKT…TEEEFNEMIN (78 aa)).

This sequence belongs to the NAD-dependent DNA ligase family. LigA subfamily. It depends on Mg(2+) as a cofactor. Mn(2+) serves as cofactor.

The enzyme catalyses NAD(+) + (deoxyribonucleotide)n-3'-hydroxyl + 5'-phospho-(deoxyribonucleotide)m = (deoxyribonucleotide)n+m + AMP + beta-nicotinamide D-nucleotide.. DNA ligase that catalyzes the formation of phosphodiester linkages between 5'-phosphoryl and 3'-hydroxyl groups in double-stranded DNA using NAD as a coenzyme and as the energy source for the reaction. It is essential for DNA replication and repair of damaged DNA. This Clostridium tetani (strain Massachusetts / E88) protein is DNA ligase.